The following is an 880-amino-acid chain: Leucine--tRNA ligase (880 aa).

The short motif at 46–56 (PYPSGALHMGH) is the 'HIGH' region element. A 'KMSKS' region motif is present at residues 638-642 (KMSKS). Position 641 (Lys-641) interacts with ATP.

The protein belongs to the class-I aminoacyl-tRNA synthetase family.

The protein resides in the cytoplasm. It catalyses the reaction tRNA(Leu) + L-leucine + ATP = L-leucyl-tRNA(Leu) + AMP + diphosphate. The chain is Leucine--tRNA ligase from Xanthomonas oryzae pv. oryzae (strain MAFF 311018).